Reading from the N-terminus, the 118-residue chain is Large ribosomal subunit protein bL20 (118 aa).

It belongs to the bacterial ribosomal protein bL20 family.

Its function is as follows. Binds directly to 23S ribosomal RNA and is necessary for the in vitro assembly process of the 50S ribosomal subunit. It is not involved in the protein synthesizing functions of that subunit. This Klebsiella pneumoniae (strain 342) protein is Large ribosomal subunit protein bL20.